The primary structure comprises 1146 residues: Inositol hexakisphosphate and diphosphoinositol-pentakisphosphate kinase (1146 aa).

The disordered stretch occupies residues 1 to 33 (MSGIKKEPIESDEVPQQETKNNLPSAPSEMSPL). Over residues 16–25 (QQETKNNLPS) the composition is skewed to polar residues. Serine 31, serine 54, and serine 77 each carry phosphoserine. Residues 93–185 (TALGNGNNTN…STSHPKPRLP (93 aa)) are disordered. The segment covering 96 to 106 (GNGNNTNTVTT) has biased composition (low complexity). A compositionally biased stretch (basic and acidic residues) spans 110–120 (KKADSESKSEA). Residues 125 to 144 (LSNSNIVNDADNINSISKTG) are compositionally biased toward polar residues. Low complexity predominate over residues 164–178 (SVPTSSASSRKSSTS). 197–198 (AK) is a substrate binding site. Residues arginine 278, lysine 351, histidine 358, arginine 377, 402–405 (EQFM), and 412–414 (DVK) contribute to the ATP site. 377-378 (RK) provides a ligand contact to substrate. 2 residues coordinate substrate: lysine 414 and arginine 428. Residues serine 430, aspartate 475, and 487-489 (DVN) each bind ATP. 492-495 (SFVK) is a binding site for substrate. The polyphosphoinositide-binding domain stretch occupies residues 530-597 (REEKEQKWVF…VLQALRIALD (68 aa)). Serine 895 and serine 1107 each carry phosphoserine. Residues 1106–1146 (TSPNLSFQKRKTRRKSVSVEKLKRPASSGSSSSTSVNKTLD) are disordered.

Belongs to the histidine acid phosphatase family. VIP1 subfamily.

It localises to the cytoplasm. The protein resides in the cytoskeleton. The enzyme catalyses 1D-myo-inositol hexakisphosphate + ATP = 1-diphospho-1D-myo-inositol 2,3,4,5,6-pentakisphosphate + ADP. It catalyses the reaction 5-diphospho-1D-myo-inositol 1,2,3,4,6-pentakisphosphate + ATP + H(+) = 1,5-bis(diphospho)-1D-myo-inositol 2,3,4,6-tetrakisphosphate + ADP. In terms of biological role, bifunctional inositol kinase that acts in concert with the IP6K kinases to synthesize the diphosphate group-containing inositol pyrophosphates diphosphoinositol pentakisphosphate, PP-InsP5, and bis-diphosphoinositol tetrakisphosphate, (PP)2-InsP4. Phosphorylates inositol hexakisphosphate (InsP6) at position 1 to produce PP-InsP5 which is in turn phosphorylated by IP6Ks to produce (PP)2-InsP4. Alternatively, phosphorylates PP-InsP5 at position 1, produced by IP6Ks from InsP6, to produce (PP)2-InsP4. Required for maintaining cellular integrity, normal growth and interactions with the ARP complex. Acts as a regulator of the PHO80-PHO85 cyclin/cyclin-dependent kinase (CDK) complex, thereby regulating signaling of phosphate availability. Required for the function of the cortical actin cytoskeleton, possibly by participating in correct F-actin localization and ensuring polarized growth. Regulates polarized growth and modulates interphase microtubule cytoskeleton. Regulates microtubule dynamics without the requirement of microtubule plus-end tracking protein Mal3. Required for growth zone selection. This chain is Inositol hexakisphosphate and diphosphoinositol-pentakisphosphate kinase, found in Saccharomyces cerevisiae (strain ATCC 204508 / S288c) (Baker's yeast).